The sequence spans 426 residues: Anaerobic glycerol-3-phosphate dehydrogenase subunit B (426 aa).

Belongs to the anaerobic G-3-P dehydrogenase subunit B family. In terms of assembly, composed of a catalytic GlpA/B dimer and of membrane bound GlpC. The cofactor is FMN.

The catalysed reaction is a quinone + sn-glycerol 3-phosphate = dihydroxyacetone phosphate + a quinol. The protein operates within polyol metabolism; glycerol degradation via glycerol kinase pathway; glycerone phosphate from sn-glycerol 3-phosphate (anaerobic route): step 1/1. In terms of biological role, conversion of glycerol 3-phosphate to dihydroxyacetone. Uses fumarate or nitrate as electron acceptor. The chain is Anaerobic glycerol-3-phosphate dehydrogenase subunit B from Haemophilus ducreyi (strain 35000HP / ATCC 700724).